Reading from the N-terminus, the 653-residue chain is Chaperone protein dnaK3 (653 aa).

Phosphothreonine; by autocatalysis is present on Thr197.

The protein belongs to the heat shock protein 70 family.

Functionally, acts as a chaperone. The protein is Chaperone protein dnaK3 (dnaK3) of Nostoc sp. (strain PCC 7120 / SAG 25.82 / UTEX 2576).